We begin with the raw amino-acid sequence, 384 residues long: BarH-like 2 homeobox protein (384 aa).

Disordered regions lie at residues 1 to 134, 154 to 235, and 364 to 384; these read MTAM…APRT, CAPY…ARTA, and PGGQ…PHPR. Composition is skewed to low complexity over residues 101–110 and 119–134; these read VPAQSLQPSP and QSAA…APRT. The segment covering 157 to 175 has biased composition (polar residues); sequence YSTSVSSPHHTPKQESNAA. The segment covering 177 to 217 has biased composition (basic and acidic residues); the sequence is ESFRPKLEQEDGKTKLDKREDPQSDIKCHGTKEEGDREITS. The homeobox DNA-binding region spans 229–288; that stretch reads PRKARTAFSDHQLNQLERSFERQKYLSVQDRMDLAAALNLTDTQVKTWYQNRRTKWKRQT.

Belongs to the BAR homeobox family.

The protein resides in the nucleus. Functionally, potential regulator of neural basic helix-loop-helix genes. It may down-regulate expression of ASCL1 and, within the thalamus, up-regulate NGN2, thereby regulating distinct patterns of neuronal differentiation. This Mus musculus (Mouse) protein is BarH-like 2 homeobox protein (Barhl2).